A 116-amino-acid chain; its full sequence is uncharacterized protein (116 aa).

Helical transmembrane passes span 55–77 (LSYS…LYSF) and 87–109 (FSYG…YAAL).

It is found in the membrane. This is an uncharacterized protein from Saccharomyces cerevisiae (strain ATCC 204508 / S288c) (Baker's yeast).